An 804-amino-acid polypeptide reads, in one-letter code: Probable cadmium-transporting ATPase (804 aa).

HMA domains are found at residues 11–74 (DKQV…LKVA) and 89–152 (DKNV…LKVI). Residues Cys-22, Cys-25, Cys-100, and Cys-103 each contribute to the Cd(2+) site. Helical transmembrane passes span 183–203 (STLL…FVNG), 207–227 (LVTS…LFKV), 248–268 (IGAA…LFAI), 413–433 (IIMV…GGSW), and 441–461 (LAVL…ISIV). Asp-492 serves as the catalytic 4-aspartylphosphate intermediate. 2 helical membrane-spanning segments follow: residues 749–771 (LNII…LLVI) and 776–798 (TLWI…SLRL).

This sequence belongs to the cation transport ATPase (P-type) (TC 3.A.3) family. Type IB subfamily.

It localises to the cell membrane. It catalyses the reaction Cd(2+)(in) + ATP + H2O = Cd(2+)(out) + ADP + phosphate + H(+). Its function is as follows. Couples the hydrolysis of ATP with the export of cadmium. Involved in cadmium resistance. The polypeptide is Probable cadmium-transporting ATPase (cadA) (Staphylococcus aureus).